Reading from the N-terminus, the 245-residue chain is 2,3-bisphosphoglycerate-dependent phosphoglycerate mutase (245 aa).

Substrate contacts are provided by residues 8 to 15 (RHGQSLWN), 21 to 22 (TG), arginine 60, 87 to 90 (ERHY), lysine 98, 114 to 115 (RR), and 183 to 184 (GN). Histidine 9 (tele-phosphohistidine intermediate) is an active-site residue. Glutamate 87 serves as the catalytic Proton donor/acceptor.

The protein belongs to the phosphoglycerate mutase family. BPG-dependent PGAM subfamily.

The enzyme catalyses (2R)-2-phosphoglycerate = (2R)-3-phosphoglycerate. The protein operates within carbohydrate degradation; glycolysis; pyruvate from D-glyceraldehyde 3-phosphate: step 3/5. Catalyzes the interconversion of 2-phosphoglycerate and 3-phosphoglycerate. The sequence is that of 2,3-bisphosphoglycerate-dependent phosphoglycerate mutase from Bacillus cereus (strain AH187).